The sequence spans 138 residues: Flagellar basal body rod protein FlgB (138 aa).

The protein belongs to the flagella basal body rod proteins family. The basal body constitutes a major portion of the flagellar organelle and consists of a number of rings mounted on a central rod. In Gram-negative bacteria, at least four rings, L, P, S and M are present, whereas Gram-positive bacteria lack the L and P rings. The rod consists of about 26 subunits of FlgG in the distal portion, and FlgB, FlgC and FlgF build up the proximal portion of the rod with about 6 subunits each. Rod assembly occurs by export via the flagellum-specific pathway of its constituent proteins and by their incorporation into the rod structure in the probable order of FlgB, FlgC, FlgF and FlgG. Another protein, FliE, also assembles onto the stable rod structure.

The protein localises to the bacterial flagellum basal body. Structural component of flagellum, the bacterial motility apparatus. Part of the rod structure of flagellar basal body. The sequence is that of Flagellar basal body rod protein FlgB (flgB) from Escherichia coli (strain K12).